A 303-amino-acid polypeptide reads, in one-letter code: Ribosomal RNA small subunit methyltransferase A (303 aa).

The S-adenosyl-L-methionine site is built by Asn37, Val39, Gly64, Glu85, Asp115, and Asn138.

The protein belongs to the class I-like SAM-binding methyltransferase superfamily. rRNA adenine N(6)-methyltransferase family. RsmA subfamily.

The protein resides in the cytoplasm. The enzyme catalyses adenosine(1518)/adenosine(1519) in 16S rRNA + 4 S-adenosyl-L-methionine = N(6)-dimethyladenosine(1518)/N(6)-dimethyladenosine(1519) in 16S rRNA + 4 S-adenosyl-L-homocysteine + 4 H(+). Functionally, specifically dimethylates two adjacent adenosines (A1518 and A1519) in the loop of a conserved hairpin near the 3'-end of 16S rRNA in the 30S particle. May play a critical role in biogenesis of 30S subunits. This is Ribosomal RNA small subunit methyltransferase A from Bifidobacterium adolescentis (strain ATCC 15703 / DSM 20083 / NCTC 11814 / E194a).